The sequence spans 262 residues: Spindlin-1 (262 aa).

The interval 1 to 51 (MKTPFGKTPGQRSRADAGHAGVSANMMKKRTSHKKHRSSVGPSKPVSQPRR) is disordered. Glycyl lysine isopeptide (Lys-Gly) (interchain with G-Cter in SUMO2) cross-links involve residues K7 and K28. Basic residues predominate over residues 27 to 38 (MKKRTSHKKHRS). K44 carries the post-translational modification N6-acetyllysine; alternate. K44 participates in a covalent cross-link: Glycyl lysine isopeptide (Lys-Gly) (interchain with G-Cter in SUMO2); alternate. The interval 53 to 116 (IVGCRIQHGW…RVSALEVLPD (64 aa)) is tudor-like domain 1. Residues 93–98 (GFDCVY) form a histone H3K4me3 and H3R8me2a binding region. Residues S109 and S124 each carry the phosphoserine; by AURKA modification. The tract at residues 132 to 193 (MIGKAVEHMF…DYKEGDLRIM (62 aa)) is tudor-like domain 2. Position 142 (E142) is a region of interest, histone H3K4me3 and H3R8me2a binding. S199 bears the Phosphoserine mark. The segment at 213–262 (LVGKQVEYAKEDGSKRTGMVIHQVEAKPSVYFIKFDDDFHIYVYDLVKTS) is tudor-like domain 3. The tract at residues 250–252 (DFH) is histone H3K4me3 and H3R8me2a binding.

The protein belongs to the SPIN/STSY family. Homodimer; may form higher-order oligomers. Interacts with TCF7L2/TCF4; the interaction is direct. Interacts with HABP4 and SERBP1. Interacts with SPINDOC; SPINDOC stabilizes SPIN1 and enhances its association with bivalent H3K4me3K9me3 mark. Interacts with SPOCD1; promoting recruitment of PIWIL4 and SPOCD1 to transposons. Post-translationally, phosphorylated during oocyte meiotic maturation. In terms of tissue distribution, highly expressed in ovarian cancer tissues.

It is found in the nucleus. The protein resides in the nucleolus. Its function is as follows. Chromatin reader that specifically recognizes and binds histone H3 both trimethylated at 'Lys-4' and 'Lys-9' (H3K4me3K9me3) and is involved in piRNA-mediated retrotransposon silencing during spermatogenesis. Plays a key role in the initiation of the PIWIL4-piRNA pathway, a pathway that directs transposon DNA methylation and silencing in the male embryonic germ cells, by promoting recruitment of DNA methylation machinery to transposons: binds young, but not old, LINE1 transposons, which are specifically marked with H3K4me3K9me3, and promotes the recruitment of PIWIL4 and SPOCD1 to transposons, leading to piRNA-directed DNA methylation. Also recognizes and binds histone H3 both trimethylated at 'Lys-4' and asymmetrically dimethylated at 'Arg-8' (H3K4me3 and H3R8me2a) and acts as an activator of Wnt signaling pathway downstream of PRMT2. In case of cancer, promotes cell cancer proliferation via activation of the Wnt signaling pathway. Overexpression induces metaphase arrest and chromosomal instability. Localizes to active rDNA loci and promotes the expression of rRNA genes. May play a role in cell-cycle regulation during the transition from gamete to embryo. Involved in oocyte meiotic resumption, a process that takes place before ovulation to resume meiosis of oocytes blocked in prophase I: may act by regulating maternal transcripts to control meiotic resumption. The chain is Spindlin-1 from Homo sapiens (Human).